Consider the following 220-residue polypeptide: Ribosomal RNA large subunit methyltransferase E (220 aa).

5 residues coordinate S-adenosyl-L-methionine: Gly60, Trp62, Asp92, Asp108, and Asp133. Lys173 acts as the Proton acceptor in catalysis. A disordered region spans residues 195 to 220 (APRKPKASRDKSSETFILGRHLKRPR).

It belongs to the class I-like SAM-binding methyltransferase superfamily. RNA methyltransferase RlmE family.

It is found in the cytoplasm. The enzyme catalyses uridine(2552) in 23S rRNA + S-adenosyl-L-methionine = 2'-O-methyluridine(2552) in 23S rRNA + S-adenosyl-L-homocysteine + H(+). Functionally, specifically methylates the uridine in position 2552 of 23S rRNA at the 2'-O position of the ribose in the fully assembled 50S ribosomal subunit. In Burkholderia lata (strain ATCC 17760 / DSM 23089 / LMG 22485 / NCIMB 9086 / R18194 / 383), this protein is Ribosomal RNA large subunit methyltransferase E.